The sequence spans 81 residues: Translational regulator CsrA (81 aa).

This sequence belongs to the CsrA/RsmA family. Homodimer; the beta-strands of each monomer intercalate to form a hydrophobic core, while the alpha-helices form wings that extend away from the core.

It is found in the cytoplasm. In terms of biological role, a translational regulator that binds mRNA to regulate translation initiation and/or mRNA stability. Usually binds in the 5'-UTR at or near the Shine-Dalgarno sequence preventing ribosome-binding, thus repressing translation. Its main target seems to be the major flagellin gene, while its function is anatagonized by FliW. In Borreliella burgdorferi (strain ATCC 35210 / DSM 4680 / CIP 102532 / B31) (Borrelia burgdorferi), this protein is Translational regulator CsrA.